A 411-amino-acid polypeptide reads, in one-letter code: uncharacterized protein (411 aa).

The segment at 32-108 is disordered; sequence LGGDPAPKPT…PEHPRRIPIP (77 aa).

This is an uncharacterized protein from Ictalurid herpesvirus 1 (strain Auburn) (IcHV-1).